The chain runs to 252 residues: Triosephosphate isomerase (252 aa).

Residue 9-11 (NWK) participates in substrate binding. The active-site Electrophile is the His-95. Catalysis depends on Glu-167, which acts as the Proton acceptor. Substrate contacts are provided by residues Gly-173, Ser-213, and 234 to 235 (GG).

This sequence belongs to the triosephosphate isomerase family. As to quaternary structure, homodimer.

It localises to the cytoplasm. It catalyses the reaction D-glyceraldehyde 3-phosphate = dihydroxyacetone phosphate. It functions in the pathway carbohydrate biosynthesis; gluconeogenesis. Its pathway is carbohydrate degradation; glycolysis; D-glyceraldehyde 3-phosphate from glycerone phosphate: step 1/1. Involved in the gluconeogenesis. Catalyzes stereospecifically the conversion of dihydroxyacetone phosphate (DHAP) to D-glyceraldehyde-3-phosphate (G3P). In Lactiplantibacillus plantarum (strain ATCC BAA-793 / NCIMB 8826 / WCFS1) (Lactobacillus plantarum), this protein is Triosephosphate isomerase.